The chain runs to 158 residues: MALEVLMLLAVLIWTGAENLHVKISCSLDWLMVSVIPVAESRNLYIFADELHLGMGCPANRIHTYVYEFIYLVRDCGIRTRVVSEETLLFQTELYFTPRNIDHDPQEIHLECSTSRKSVWLTPVSTENEIKLDPSPFIADFQTTAEELGLLSSSPNLL.

The signal sequence occupies residues 1–17 (MALEVLMLLAVLIWTGA).

The protein belongs to the PLAC1 family. As to expression, highly expressed in oocytes.

It is found in the secreted. The protein resides in the cytoplasm. Functionally, involved in oocyte maturation. The chain is Oocyte-secreted protein 2 (OOSP2) from Homo sapiens (Human).